The following is a 104-amino-acid chain: Large ribosomal subunit protein bL21 (104 aa).

It belongs to the bacterial ribosomal protein bL21 family. Part of the 50S ribosomal subunit. Contacts protein L20.

Its function is as follows. This protein binds to 23S rRNA in the presence of protein L20. The polypeptide is Large ribosomal subunit protein bL21 (Helicobacter pylori (strain Shi470)).